Consider the following 491-residue polypeptide: FAD-dependent monooxygenase cle3 (491 aa).

Residues glutamate 55, glycine 69, arginine 128, aspartate 330, and alanine 343 each coordinate FAD. Asparagine 380 carries N-linked (GlcNAc...) asparagine glycosylation. Residues 462 to 482 traverse the membrane as a helical segment; that stretch reads STVVWTSLGILGLVVFLFLLF.

It belongs to the paxM FAD-dependent monooxygenase family. FAD serves as cofactor.

The protein resides in the membrane. The protein operates within secondary metabolite biosynthesis; terpenoid biosynthesis. In terms of biological role, FAD-dependent monooxygenase; part of the cluster A that mediates the biosynthesis of chevalone E and its oxidized derivatives that possess a unique five-membered lactone ring and can synergistically enhance the cytotoxicity of doxorubicin (DOX) in breast cancer cells. Within the pathway, cle3 takes part to the biosynthesis of the molecular scaffold by catalyzing the formation of an (S)-epoxide ring at the terminal olefin of the geranylgeranyl group. The molecular scaffold is commonly biosynthesized by a series of enzymes including the non-reducing polyketide synthase (NR-PKS) cle1 that produces the alpha-pyrone triacetic acid lactone (TAL); The membrane-bound prenyltransferase cle5 that accepts TAL as its substrate to perform a C-3 geranylgeranylation reaction, in which the pathway-dedicated GGPS cle6 is required to provide GGPP, the other substrate of cle5; the FAD-dependent monooxygenase Cle3 that forms an (S)-epoxide ring at the terminal olefin of the geranylgeranyl group; and the terpene cyclase Cle7 that catalyzes the cyclization of the prenyl group that yields the pentacyclic pathway intermediate chevalone E. Chevalone E can derivatize into seven new oxidized analogs by the cytochrome P450 monooxygenases cle2 (acting at C-20) and cle4 (acting at C-11 and C-12). This chain is FAD-dependent monooxygenase cle3, found in Aspergillus versicolor.